Here is a 945-residue protein sequence, read N- to C-terminus: Leucine--tRNA ligase (945 aa).

Residues 43 to 53 carry the 'HIGH' region motif; that stretch reads PYPNGAIHIGH. Residues 638-642 carry the 'KMSKS' region motif; the sequence is KMSKS. Lysine 641 is an ATP binding site.

The protein belongs to the class-I aminoacyl-tRNA synthetase family.

The protein localises to the cytoplasm. The enzyme catalyses tRNA(Leu) + L-leucine + ATP = L-leucyl-tRNA(Leu) + AMP + diphosphate. In Pyrobaculum aerophilum (strain ATCC 51768 / DSM 7523 / JCM 9630 / CIP 104966 / NBRC 100827 / IM2), this protein is Leucine--tRNA ligase.